Reading from the N-terminus, the 91-residue chain is Sec-independent protein translocase protein TatA (91 aa).

A helical transmembrane segment spans residues 1 to 21 (MGIFDWKHWIVILIVVVLVFG). Residues 41–91 (KAMNDDDKPAEQPAPQPQQAQPAPQGSPLNQPHTIDAQAHKVDEPIRKDQV) are disordered. A compositionally biased stretch (low complexity) spans 51–64 (EQPAPQPQQAQPAP). Residues 78–91 (QAHKVDEPIRKDQV) show a composition bias toward basic and acidic residues.

It belongs to the TatA/E family. In terms of assembly, the Tat system comprises two distinct complexes: a TatABC complex, containing multiple copies of TatA, TatB and TatC subunits, and a separate TatA complex, containing only TatA subunits. Substrates initially bind to the TatABC complex, which probably triggers association of the separate TatA complex to form the active translocon.

The protein resides in the cell inner membrane. Part of the twin-arginine translocation (Tat) system that transports large folded proteins containing a characteristic twin-arginine motif in their signal peptide across membranes. TatA could form the protein-conducting channel of the Tat system. The chain is Sec-independent protein translocase protein TatA from Pseudomonas syringae pv. syringae (strain B728a).